A 1885-amino-acid chain; its full sequence is Chitin synthase 5 (1885 aa).

In terms of domain architecture, Myosin motor spans 1-789; it reads MATRGNVPAH…SIALTGSQAA (789 aa). 99-106 contacts ATP; sequence GESGSGKT. Residues Asn219 and Asn429 are each glycosylated (N-linked (GlcNAc...) asparagine). A disordered region spans residues 601–649; the sequence is KPLRMPSVSRKKHDQLRRMASRRADRSPAPQEEEPLPGTEEAKVRRTKP. The segment covering 609 to 621 has biased composition (basic residues); that stretch reads SRKKHDQLRRMAS. Residues 666-690 are actin-binding; the sequence is LDNITKSLTAPNVNNYFVFCLKPND. Asn668 carries an N-linked (GlcNAc...) asparagine glycan. Positions 794 to 817 are disordered; that stretch reads GDIGSPSRPDTPGHNPFSDSKARL. Helical transmembrane passes span 894-914 and 929-949; these read WLAI…KWIG and FAIN…IIVF. A Cytochrome b5 heme-binding domain is found at 957-1016; sequence QNVYSAAELSAHDGKGKHSAYVAIRGQVFDLGAFMPNHYPKIIPQSSLKKYAGVDATGLF. 2 N-linked (GlcNAc...) asparagine glycosylation sites follow: Asn1043 and Asn1068. A helical membrane pass occupies residues 1205-1225; the sequence is ILLAVSILLCSVIGFKFFAAL. Residues Asn1462 and Asn1568 are each glycosylated (N-linked (GlcNAc...) asparagine). Transmembrane regions (helical) follow at residues 1599-1619, 1626-1646, and 1653-1673; these read LLST…IVLL, VPLT…IIFI, and MIGW…GLPL. N-linked (GlcNAc...) asparagine glycans are attached at residues Asn1759 and Asn1790. Residues 1827–1882 form the DEK-C domain; sequence LPTDDMLLNEIRDILRTADLMTVTKKGIKQELERRFNVNLDMKRAYIGSATEAILS.

It in the N-terminal section; belongs to the TRAFAC class myosin-kinesin ATPase superfamily. Myosin family. In the C-terminal section; belongs to the chitin synthase family. Class V subfamily. In terms of processing, maximal activity requires trypsin activation, suggesting a zymogenic nature.

It is found in the cell membrane. It localises to the membrane. The catalysed reaction is [(1-&gt;4)-N-acetyl-beta-D-glucosaminyl](n) + UDP-N-acetyl-alpha-D-glucosamine = [(1-&gt;4)-N-acetyl-beta-D-glucosaminyl](n+1) + UDP + H(+). Functionally, polymerizes chitin, a structural polymer of the cell wall and septum, by transferring the sugar moiety of UDP-GlcNAc to the non-reducing end of the growing chitin polymer. CHS5 is required for the sustained growth at 37 degrees Celsius and is of critical importance for virulence. Especially important at infection temperatures for maintaining the cell wall integrity of developing yeast buds, elongating tips of hyphae, and random sites of expansion in sclerotic forms. This Exophiala dermatitidis (strain ATCC 34100 / CBS 525.76 / NIH/UT8656) (Black yeast) protein is Chitin synthase 5.